A 70-amino-acid chain; its full sequence is Biotin carboxyl carrier protein of acetyl-CoA carboxylase (70 aa).

The Biotinyl-binding domain maps to 1-69 (GTVVAPMVGL…QDGIKLFALK (69 aa)). Lys-35 is modified (N6-biotinyllysine).

It is found in the plastid. It localises to the chloroplast. It functions in the pathway lipid metabolism; fatty acid biosynthesis. Its function is as follows. This protein is a component of the acetyl coenzyme A carboxylase complex; first, biotin carboxylase catalyzes the carboxylation of the carrier protein and then the transcarboxylase transfers the carboxyl group to form malonyl-CoA. The sequence is that of Biotin carboxyl carrier protein of acetyl-CoA carboxylase from Solanum lycopersicum (Tomato).